The chain runs to 156 residues: Ribosomal RNA large subunit methyltransferase H (156 aa).

Residues L73, G104, and 123–128 (LSKLTL) each bind S-adenosyl-L-methionine.

The protein belongs to the RNA methyltransferase RlmH family. As to quaternary structure, homodimer.

The protein localises to the cytoplasm. It carries out the reaction pseudouridine(1915) in 23S rRNA + S-adenosyl-L-methionine = N(3)-methylpseudouridine(1915) in 23S rRNA + S-adenosyl-L-homocysteine + H(+). In terms of biological role, specifically methylates the pseudouridine at position 1915 (m3Psi1915) in 23S rRNA. In Idiomarina loihiensis (strain ATCC BAA-735 / DSM 15497 / L2-TR), this protein is Ribosomal RNA large subunit methyltransferase H.